A 92-amino-acid chain; its full sequence is YcgL domain-containing protein Sputcn32_1766 (92 aa).

In terms of domain architecture, YcgL spans 1–85 (MLCTVYKSTR…PQVNLLAEHK (85 aa)).

The polypeptide is YcgL domain-containing protein Sputcn32_1766 (Shewanella putrefaciens (strain CN-32 / ATCC BAA-453)).